A 166-amino-acid chain; its full sequence is Endoribonuclease YbeY (166 aa).

Zn(2+)-binding residues include His132, His136, and His142.

The protein belongs to the endoribonuclease YbeY family. The cofactor is Zn(2+).

The protein resides in the cytoplasm. In terms of biological role, single strand-specific metallo-endoribonuclease involved in late-stage 70S ribosome quality control and in maturation of the 3' terminus of the 16S rRNA. The chain is Endoribonuclease YbeY from Clostridium botulinum (strain Alaska E43 / Type E3).